The primary structure comprises 694 residues: Polyphosphate kinase (694 aa).

Asn45 lines the ATP pocket. Arg367 and Arg397 together coordinate Mg(2+). The active-site Phosphohistidine intermediate is His427. Positions 460, 553, and 580 each coordinate ATP.

The protein belongs to the polyphosphate kinase 1 (PPK1) family. The cofactor is Mg(2+). In terms of processing, an intermediate of this reaction is the autophosphorylated ppk in which a phosphate is covalently linked to a histidine residue through a N-P bond.

It carries out the reaction [phosphate](n) + ATP = [phosphate](n+1) + ADP. In terms of biological role, catalyzes the reversible transfer of the terminal phosphate of ATP to form a long-chain polyphosphate (polyP). This is Polyphosphate kinase from Campylobacter jejuni subsp. jejuni serotype O:6 (strain 81116 / NCTC 11828).